A 127-amino-acid chain; its full sequence is Large ribosomal subunit protein bL12 (127 aa).

A disordered region spans residues valine 94–lysine 114. Over residues alanine 104–lysine 114 the composition is skewed to basic and acidic residues.

It belongs to the bacterial ribosomal protein bL12 family. As to quaternary structure, homodimer. Part of the ribosomal stalk of the 50S ribosomal subunit. Forms a multimeric L10(L12)X complex, where L10 forms an elongated spine to which 2 to 4 L12 dimers bind in a sequential fashion. Binds GTP-bound translation factors.

Forms part of the ribosomal stalk which helps the ribosome interact with GTP-bound translation factors. Is thus essential for accurate translation. This Nitratidesulfovibrio vulgaris (strain ATCC 29579 / DSM 644 / CCUG 34227 / NCIMB 8303 / VKM B-1760 / Hildenborough) (Desulfovibrio vulgaris) protein is Large ribosomal subunit protein bL12.